The chain runs to 100 residues: Ferredoxin (100 aa).

Residues 1–8 (MLSQVCRF) constitute a propeptide that is removed on maturation. One can recognise a 2Fe-2S ferredoxin-type domain in the interval 9–100 (GTITAVKGGV…GENDGAVFEL (92 aa)). Cysteine 46, cysteine 52, cysteine 55, and cysteine 85 together coordinate [2Fe-2S] cluster.

It depends on [2Fe-2S] cluster as a cofactor.

Its subcellular location is the hydrogenosome. Its function is as follows. Ferredoxins are iron-sulfur proteins that transfer electrons in a wide variety of metabolic reactions. It links pyruvate:ferredoxin oxidoreductase to hydrogenase. This is Ferredoxin from Trichomonas vaginalis.